The sequence spans 37 residues: Large ribosomal subunit protein bL36 (37 aa).

Belongs to the bacterial ribosomal protein bL36 family.

This chain is Large ribosomal subunit protein bL36, found in Mycobacteroides abscessus (strain ATCC 19977 / DSM 44196 / CCUG 20993 / CIP 104536 / JCM 13569 / NCTC 13031 / TMC 1543 / L948) (Mycobacterium abscessus).